We begin with the raw amino-acid sequence, 185 residues long: Probable RNA 2'-phosphotransferase (185 aa).

This sequence belongs to the KptA/TPT1 family.

Its function is as follows. Removes the 2'-phosphate from RNA via an intermediate in which the phosphate is ADP-ribosylated by NAD followed by a presumed transesterification to release the RNA and generate ADP-ribose 1''-2''-cyclic phosphate (APPR&gt;P). May function as an ADP-ribosylase. The polypeptide is Probable RNA 2'-phosphotransferase (Rhizobium rhizogenes (strain K84 / ATCC BAA-868) (Agrobacterium radiobacter)).